A 235-amino-acid polypeptide reads, in one-letter code: uncharacterized protein (235 aa).

The ABC transporter domain maps to 2–235; that stretch reads IKLKNVTKTY…EEKLRGFDDR (234 aa). ATP is bound at residue 38–45; it reads GPSGSGKS.

The protein belongs to the ABC transporter superfamily.

This is an uncharacterized protein from Methanocaldococcus jannaschii (strain ATCC 43067 / DSM 2661 / JAL-1 / JCM 10045 / NBRC 100440) (Methanococcus jannaschii).